Consider the following 914-residue polypeptide: Scaffold attachment factor B1 (914 aa).

A compositionally biased stretch (low complexity) spans 1–24 (MAETLSGLGDSGAAGAAALSSASS). The disordered stretch occupies residues 1–33 (MAETLSGLGDSGAAGAAALSSASSETGTRRLSD). Ala-2 is modified (N-acetylalanine). Phosphoserine occurs at positions 24 and 55. The 35-residue stretch at 31–65 (LSDLRVIDLRAELRKRNVDSSGNKSVLMERLKKAI) folds into the SAP domain. The interval 64–117 (AIEDEGGNPDEIEITSEGNKKTSKRSSKGRKPEEEGVEDNGLEENSGDGQEDVE) is disordered. A compositionally biased stretch (acidic residues) spans 67–77 (DEGGNPDEIEI). Position 79 is a phosphoserine (Ser-79). Acidic residues predominate over residues 98-117 (EGVEDNGLEENSGDGQEDVE). Residues Lys-172 and Lys-186 each participate in a glycyl lysine isopeptide (Lys-Gly) (interchain with G-Cter in SUMO2) cross-link. Thr-188 bears the Phosphothreonine mark. Ser-195, Ser-197, and Ser-209 each carry phosphoserine. The disordered stretch occupies residues 221-407 (LGETCKSEPV…EKGRSSCGRN (187 aa)). Basic and acidic residues predominate over residues 225-234 (CKSEPVKEES). A Glycyl lysine isopeptide (Lys-Gly) (interchain with G-Cter in SUMO) cross-link involves residue Lys-231. A compositionally biased stretch (polar residues) spans 275-286 (SESTAHAQSSKA). Basic and acidic residues predominate over residues 293–309 (VKREPAEQPGDGERTDC). Residue Lys-294 forms a Glycyl lysine isopeptide (Lys-Gly) (interchain with G-Cter in SUMO) linkage. Over residues 319–330 (EQSSAASELAEA) the composition is skewed to low complexity. Residues 346–359 (EARDSKEDGRKFDF) show a composition bias toward basic and acidic residues. Residues 371 to 383 (ESSTSEGADQKMS) show a composition bias toward polar residues. Lys-381 participates in a covalent cross-link: Glycyl lysine isopeptide (Lys-Gly) (interchain with G-Cter in SUMO2). Phosphoserine is present on residues Ser-383 and Ser-384. The segment covering 390–401 (DTKRLSKEEKGR) has biased composition (basic and acidic residues). Lys-392 participates in a covalent cross-link: Glycyl lysine isopeptide (Lys-Gly) (interchain with G-Cter in SUMO2). The RRM domain maps to 406 to 484 (RNFWVSGLSS…KMISVEKAKN (79 aa)). Residue Ser-415 is modified to Phosphoserine. 2 stretches are compositionally biased toward basic and acidic residues: residues 477-551 (ISVE…ERSR) and 559-570 (GTERTVVMDKSK). Disordered regions lie at residues 477–636 (ISVE…QAQW), 670–706 (RERMHVEHERRREQERIHREREELRRQQELRYEQERR), and 748–914 (FDHR…TRRY). Glycyl lysine isopeptide (Lys-Gly) (interchain with G-Cter in SUMO2) cross-links involve residues Lys-483, Lys-514, Lys-543, and Lys-570. The segment at 528–791 (GDDGSGEKSK…RHGGPERHGR (264 aa)) is interaction with POLR2A; SFRS1; SFRS9 and SFRS10. Residue Lys-578 forms a Glycyl lysine isopeptide (Lys-Gly) (interchain with G-Cter in SUMO1); alternate linkage. Lys-578 participates in a covalent cross-link: Glycyl lysine isopeptide (Lys-Gly) (interchain with G-Cter in SUMO2); alternate. Ser-580, Ser-582, Ser-601, and Ser-604 each carry phosphoserine. Over residues 581–636 (GSKERASKSLDRKSASREKRSVVSFDKVKEPRKSRDSESHRVRERSEREQRMQAQW) the composition is skewed to basic and acidic residues. A Nuclear localization signal motif is present at residues 599–616 (KRSVVSFDKVKEPRKSRD). Residues 599–914 (KRSVVSFDKV…PSDARFTRRY (316 aa)) form an interaction with SAFB2 region. Lys-607 carries the post-translational modification N6-acetyllysine. Over residues 748-795 (FDHRDRGRYPDHSVDRREGSRSMMGEREGQHYPERHGGPERHGRDSRD) the composition is skewed to basic and acidic residues. Omega-N-methylarginine is present on Arg-810. Basic and acidic residues-rich tracts occupy residues 816–831 (PRRDWGDHGRREDDRA) and 840–850 (MMDRDHKRWQG). Residue Lys-846 forms a Glycyl lysine isopeptide (Lys-Gly) (interchain with G-Cter in SUMO2) linkage. Asymmetric dimethylarginine is present on residues Arg-867, Arg-873, and Arg-883. The span at 891–900 (GMQGGFGGQS) shows a compositional bias: gly residues. Residues 904-914 (RPSDARFTRRY) are compositionally biased toward basic and acidic residues.

Monomer and homodimer. Interacts with KHDRBS3. Interacts with CLK2. Interacts with POLR2A, ASF/SRSF1, SRp30c/SRFS9 and TRA2B/SFRS10. Interacts with SRPK1 and inhibits its activity. Interacts with RBMX. Interacts with FUS. Interacts with ZBED4. Sumoylated by PIAS1 with SUMO1 and SUMO2/3, desumoylated by SENP1. Sumoylation is required for transcriptional repressor activity.

Its subcellular location is the nucleus. Its function is as follows. Binds to scaffold/matrix attachment region (S/MAR) DNA and forms a molecular assembly point to allow the formation of a 'transcriptosomal' complex (consisting of SR proteins and RNA polymerase II) coupling transcription and RNA processing. Functions as an estrogen receptor corepressor and can also bind to the HSP27 promoter and decrease its transcription. Thereby acts as a negative regulator of cell proliferation. When associated with RBMX, binds to and stimulates transcription from the SREBF1 promoter. This Pongo abelii (Sumatran orangutan) protein is Scaffold attachment factor B1 (SAFB).